The chain runs to 360 residues: MVDIIFHYPFLGAMGDHSKKKPGTAMCVGCGSQIHDQFILRVSPDLEWHAACLKCAECSQYLDETCTCFVRDGKTYCKRDYVRLFGIKCAQCQVGFSSSDLVMRARDSVYHIECFRCSVCSRQLLPGDEFSLREHELLCRADHGLLLERAAAGSPRSPGPLPGTPPGLHLPDAGSGQQVSLRTHVHKQAEKTTRVRTVLNEKQLHTLRTCYAANPRPDALMKEQLVEMTGLSPRVIRVWFQNKRCKDKKKSILMKQLQQQQHSDKASLQGLTGTLLVAGSPSAHENAVQGSAVEVQTYQPPWKALSEFALQSDLDQPAFQQLVSFSESGSLGNSSGSDVTSLSSQLPDTPNSMVPSPVET.

LIM zinc-binding domains are found at residues A25–G86 and I87–R149. Residues A151–Q177 form a disordered region. Phosphoserine occurs at positions 154 and 157. Residues T192–S251 constitute a DNA-binding region (homeobox). Residues G273–W302 are LIM-binding domain (LID). S280 bears the Phosphoserine mark. Residues S328–S337 are compositionally biased toward low complexity. A disordered region spans residues S328 to T360. Residues D338–T360 show a composition bias toward polar residues.

In terms of assembly, interacts with LHX4.

Its subcellular location is the nucleus. Its function is as follows. Transcriptional factor that defines subclasses of motoneurons that segregate into columns in the spinal cord and select distinct axon pathways. The sequence is that of Insulin gene enhancer protein ISL-2 (Isl2) from Rattus norvegicus (Rat).